We begin with the raw amino-acid sequence, 407 residues long: Phosphopentomutase (407 aa).

The Mn(2+) site is built by Asp-11, Asp-305, His-310, Asp-346, His-347, and His-358.

It belongs to the phosphopentomutase family. Requires Mn(2+) as cofactor.

It is found in the cytoplasm. It carries out the reaction 2-deoxy-alpha-D-ribose 1-phosphate = 2-deoxy-D-ribose 5-phosphate. The catalysed reaction is alpha-D-ribose 1-phosphate = D-ribose 5-phosphate. It participates in carbohydrate degradation; 2-deoxy-D-ribose 1-phosphate degradation; D-glyceraldehyde 3-phosphate and acetaldehyde from 2-deoxy-alpha-D-ribose 1-phosphate: step 1/2. In terms of biological role, isomerase that catalyzes the conversion of deoxy-ribose 1-phosphate (dRib-1-P) and ribose 1-phosphate (Rib-1-P) to deoxy-ribose 5-phosphate (dRib-5-P) and ribose 5-phosphate (Rib-5-P), respectively. The protein is Phosphopentomutase of Legionella pneumophila (strain Corby).